Here is a 648-residue protein sequence, read N- to C-terminus: DNA mismatch repair protein MutL (648 aa).

Residues 385–430 form a disordered region; sequence STVKGPAVNEPLTENTLNQQKVKTSASTPVVHTGNSVEPKPETSTA. Residues 396–430 are compositionally biased toward polar residues; the sequence is LTENTLNQQKVKTSASTPVVHTGNSVEPKPETSTA.

This sequence belongs to the DNA mismatch repair MutL/HexB family.

Functionally, this protein is involved in the repair of mismatches in DNA. It is required for dam-dependent methyl-directed DNA mismatch repair. May act as a 'molecular matchmaker', a protein that promotes the formation of a stable complex between two or more DNA-binding proteins in an ATP-dependent manner without itself being part of a final effector complex. In Agathobacter rectalis (strain ATCC 33656 / DSM 3377 / JCM 17463 / KCTC 5835 / VPI 0990) (Eubacterium rectale), this protein is DNA mismatch repair protein MutL.